Reading from the N-terminus, the 289-residue chain is Acetyl-coenzyme A carboxylase carboxyl transferase subunit beta (289 aa).

The 267-residue stretch at 23 to 289 folds into the CoA carboxyltransferase N-terminal domain; sequence HWIKCPSCSA…YDENPCLLHL (267 aa). The Zn(2+) site is built by C27, C30, C46, and C49. The C4-type zinc-finger motif lies at 27 to 49; it reads CPSCSALMYYKEVIAQHHVCPKC.

Belongs to the AccD/PCCB family. Acetyl-CoA carboxylase is a heterohexamer composed of biotin carboxyl carrier protein (AccB), biotin carboxylase (AccC) and two subunits each of ACCase subunit alpha (AccA) and ACCase subunit beta (AccD). Zn(2+) is required as a cofactor.

The protein resides in the cytoplasm. The enzyme catalyses N(6)-carboxybiotinyl-L-lysyl-[protein] + acetyl-CoA = N(6)-biotinyl-L-lysyl-[protein] + malonyl-CoA. Its pathway is lipid metabolism; malonyl-CoA biosynthesis; malonyl-CoA from acetyl-CoA: step 1/1. Component of the acetyl coenzyme A carboxylase (ACC) complex. Biotin carboxylase (BC) catalyzes the carboxylation of biotin on its carrier protein (BCCP) and then the CO(2) group is transferred by the transcarboxylase to acetyl-CoA to form malonyl-CoA. The sequence is that of Acetyl-coenzyme A carboxylase carboxyl transferase subunit beta from Wolinella succinogenes (strain ATCC 29543 / DSM 1740 / CCUG 13145 / JCM 31913 / LMG 7466 / NCTC 11488 / FDC 602W) (Vibrio succinogenes).